Here is a 45-residue protein sequence, read N- to C-terminus: MPLYDYKCQSKDCAKEYEKIKKISGRDTGVCPDCHRLAVRLVSAS.

This is an uncharacterized protein from Escherichia coli (Bacteriophage T4).